We begin with the raw amino-acid sequence, 343 residues long: ATP-dependent 6-phosphofructokinase (343 aa).

ATP-binding positions include G10 and 103-106 (GEGT). E104 contributes to the Mg(2+) binding site. Substrate-binding positions include 126–128 (TID), R163, 170–172 (MGR), E223, R267, and 273–276 (HVQR). D128 (proton acceptor) is an active-site residue.

This sequence belongs to the phosphofructokinase type A (PFKA) family. Mixed-substrate PFK group III subfamily. Homodimer or homotetramer. The cofactor is Mg(2+).

It is found in the cytoplasm. The catalysed reaction is beta-D-fructose 6-phosphate + ATP = beta-D-fructose 1,6-bisphosphate + ADP + H(+). The protein operates within carbohydrate degradation; glycolysis; D-glyceraldehyde 3-phosphate and glycerone phosphate from D-glucose: step 3/4. Catalyzes the phosphorylation of D-fructose 6-phosphate to fructose 1,6-bisphosphate by ATP, the first committing step of glycolysis. The chain is ATP-dependent 6-phosphofructokinase from Mycobacterium leprae (strain TN).